We begin with the raw amino-acid sequence, 95 residues long: Co-chaperonin GroES (95 aa).

The protein belongs to the GroES chaperonin family. Heptamer of 7 subunits arranged in a ring. Interacts with the chaperonin GroEL.

Its subcellular location is the cytoplasm. Functionally, together with the chaperonin GroEL, plays an essential role in assisting protein folding. The GroEL-GroES system forms a nano-cage that allows encapsulation of the non-native substrate proteins and provides a physical environment optimized to promote and accelerate protein folding. GroES binds to the apical surface of the GroEL ring, thereby capping the opening of the GroEL channel. In Streptococcus equi subsp. equi (strain 4047), this protein is Co-chaperonin GroES.